Here is a 429-residue protein sequence, read N- to C-terminus: Bifunctional protein GlmU (429 aa).

The pyrophosphorylase stretch occupies residues 1–223 (MKTSILILAA…EDEFMGINDK (223 aa)). Residues 8–11 (LAAG), K22, and 81–82 (GT) each bind UDP-N-acetyl-alpha-D-glucosamine. Residue D102 coordinates Mg(2+). UDP-N-acetyl-alpha-D-glucosamine-binding residues include G135, E149, N164, and N221. N221 is a binding site for Mg(2+). A linker region spans residues 224 to 244 (FELSIAENFMQEKIKKYWMQQ). The N-acetyltransferase stretch occupies residues 245 to 429 (GVIFHLPQST…KDYYYKKFQK (185 aa)). Residues R308 and K325 each contribute to the UDP-N-acetyl-alpha-D-glucosamine site. H336 (proton acceptor) is an active-site residue. Residues Y339 and N350 each contribute to the UDP-N-acetyl-alpha-D-glucosamine site. Acetyl-CoA contacts are provided by residues 359 to 360 (NY), S378, A396, and R413.

It in the N-terminal section; belongs to the N-acetylglucosamine-1-phosphate uridyltransferase family. This sequence in the C-terminal section; belongs to the transferase hexapeptide repeat family. As to quaternary structure, homotrimer. Mg(2+) is required as a cofactor.

The protein resides in the cytoplasm. It carries out the reaction alpha-D-glucosamine 1-phosphate + acetyl-CoA = N-acetyl-alpha-D-glucosamine 1-phosphate + CoA + H(+). The catalysed reaction is N-acetyl-alpha-D-glucosamine 1-phosphate + UTP + H(+) = UDP-N-acetyl-alpha-D-glucosamine + diphosphate. It functions in the pathway nucleotide-sugar biosynthesis; UDP-N-acetyl-alpha-D-glucosamine biosynthesis; N-acetyl-alpha-D-glucosamine 1-phosphate from alpha-D-glucosamine 6-phosphate (route II): step 2/2. Its pathway is nucleotide-sugar biosynthesis; UDP-N-acetyl-alpha-D-glucosamine biosynthesis; UDP-N-acetyl-alpha-D-glucosamine from N-acetyl-alpha-D-glucosamine 1-phosphate: step 1/1. The protein operates within bacterial outer membrane biogenesis; LPS lipid A biosynthesis. Catalyzes the last two sequential reactions in the de novo biosynthetic pathway for UDP-N-acetylglucosamine (UDP-GlcNAc). The C-terminal domain catalyzes the transfer of acetyl group from acetyl coenzyme A to glucosamine-1-phosphate (GlcN-1-P) to produce N-acetylglucosamine-1-phosphate (GlcNAc-1-P), which is converted into UDP-GlcNAc by the transfer of uridine 5-monophosphate (from uridine 5-triphosphate), a reaction catalyzed by the N-terminal domain. The chain is Bifunctional protein GlmU from Campylobacter jejuni subsp. jejuni serotype O:6 (strain 81116 / NCTC 11828).